Consider the following 159-residue polypeptide: Ethylene-responsive transcription factor ERF069 (159 aa).

Disordered stretches follow at residues 1-36 (MKRIVRISFTDMEATDSSSSEDESPPSSRRRGKKLV) and 128-159 (DAPTNFGRPDVDSAVVKKQDSDASGGASEEVV). Positions 74-134 (KFRGVRQRPW…IGPDAPTNFG (61 aa)) form a DNA-binding region, AP2/ERF. The span at 136–148 (PDVDSAVVKKQDS) shows a compositional bias: basic and acidic residues.

This sequence belongs to the AP2/ERF transcription factor family. ERF subfamily.

It is found in the nucleus. Probably acts as a transcriptional activator. Binds to the GCC-box pathogenesis-related promoter element. May be involved in the regulation of gene expression by stress factors and by components of stress signal transduction pathways. The chain is Ethylene-responsive transcription factor ERF069 (ERF069) from Arabidopsis thaliana (Mouse-ear cress).